The sequence spans 210 residues: Outer-membrane lipoprotein LolB (210 aa).

Residues 1–29 (MSLISNNEERSLRVRYCIAIALSALLISG) form the signal peptide. Cys30 carries N-palmitoyl cysteine lipidation. Cys30 is lipidated: S-diacylglycerol cysteine.

The protein belongs to the LolB family. Monomer.

The protein resides in the cell outer membrane. Functionally, plays a critical role in the incorporation of lipoproteins in the outer membrane after they are released by the LolA protein. The sequence is that of Outer-membrane lipoprotein LolB from Coxiella burnetii (strain CbuG_Q212) (Coxiella burnetii (strain Q212)).